A 332-amino-acid chain; its full sequence is Centrosomal AT-AC splicing factor (332 aa).

Residues 1–169 form a required for centrosome location region; the sequence is MAPAQRCPLC…QSRQEVVRSV (169 aa). At K31 the chain carries N6-acetyllysine; by NAT10. Residues 137–168 are a coiled coil; sequence LDSYEEKEDKVIKEMAAQIREVEQSRQEVVRS. The tract at residues 169–213 is disordered; sequence VLEPQAVPDPEEGSSAPRSWKGMNSQVASSLQQPSNLDLPPAPEL. Residues 190 to 204 show a composition bias toward polar residues; that stretch reads GMNSQVASSLQQPSN.

Interacts with SASS6; the interaction increases with CENATAC acetylation. Acetylated. Acetylation oscillates throughout the cell cycle, and the acetylation state at Lys-31 is regulated by the deacetylase SIRT1 and the acetyltransferase NAT10. Deacetylated CENATAC is responsible for its centrosome targeting, and acetylated CENATAC promotes SASS6 degradation by enhancing the binding affinity of SASS6 for APC/C E3 ubiquitin-protein ligase complex/FZR1.

The protein resides in the cytoplasm. It localises to the cytoskeleton. The protein localises to the microtubule organizing center. Its subcellular location is the centrosome. Functionally, component of the minor spliceosome that promotes splicing of a specific, rare minor intron subtype. Negative regulator of centrosome duplication. Constrains centriole number by modulating the degradation of the centrosome-duplication-associated protein SASS6 in an acetylation-dependent manner. SIRT1 deacetylates CENATAC in G1 phase, allowing for SASS6 accumulation on the centrosome and subsequent procentriole assembly. The CENATAC acetylation level is restored in mitosis by NAT10, promoting SASS6 proteasome degradation by facilitating SASS6 binding to APC/C E3 ubiquitin-protein ligase complex/FZR1. The protein is Centrosomal AT-AC splicing factor of Homo sapiens (Human).